The primary structure comprises 265 residues: Anaphase-promoting complex subunit 9 (265 aa).

In terms of assembly, the APC/C is composed of at least 13 subunits that stay tightly associated throughout the cell cycle: APC1, APC2, APC4, APC5, APC9, APC11, CDC16, CDC23, CDC26, CDC27, DOC1, MND2 and SWM1.

The protein localises to the cytoplasm. The protein resides in the nucleus. The protein operates within protein modification; protein ubiquitination. Component of the anaphase promoting complex/cyclosome (APC/C), a cell cycle-regulated E3 ubiquitin-protein ligase complex that controls progression through mitosis and the G1 phase of the cell cycle. The APC/C is thought to confer substrate specificity and, in the presence of ubiquitin-conjugating E2 enzymes, it catalyzes the formation of protein-ubiquitin conjugates that are subsequently degraded by the 26S proteasome. In early mitosis, the APC/C is activated by CDC20 and targets securin PDS1, the B-type cyclin CLB5, and other anaphase inhibitory proteins for proteolysis, thereby triggering the separation of sister chromatids at the metaphase-to-anaphase transition. In late mitosis and in G1, degradation of CLB5 allows activation of the APC/C by CDH1, which is needed to destroy CDC20 and the B-type cyclin CLB2 to allow exit from mitosis and creating the low CDK state necessary for cytokinesis and for reforming prereplicative complexes in G1 prior to another round of replication. The protein is Anaphase-promoting complex subunit 9 (APC9) of Saccharomyces cerevisiae (strain ATCC 204508 / S288c) (Baker's yeast).